The primary structure comprises 295 residues: F-box only protein 8 (295 aa).

Residues 35-80 (TWVARYIPQDLLIEILTRLPPKSVMRFKCVSKFWSSLLSSRYFCNR) form the F-box domain.

This chain is F-box only protein 8 (FBX8), found in Arabidopsis thaliana (Mouse-ear cress).